The following is a 210-amino-acid chain: Na(+)-translocating NADH-quinone reductase subunit D (210 aa).

Transmembrane regions (helical) follow at residues Ser-9–Cys-29, Leu-42–Ile-62, Ile-72–Ala-92, Val-103–Met-123, Phe-131–Val-151, and Asn-178–Ile-198.

The protein belongs to the NqrDE/RnfAE family. In terms of assembly, composed of six subunits; NqrA, NqrB, NqrC, NqrD, NqrE and NqrF.

It is found in the cell inner membrane. The enzyme catalyses a ubiquinone + n Na(+)(in) + NADH + H(+) = a ubiquinol + n Na(+)(out) + NAD(+). Its function is as follows. NQR complex catalyzes the reduction of ubiquinone-1 to ubiquinol by two successive reactions, coupled with the transport of Na(+) ions from the cytoplasm to the periplasm. NqrA to NqrE are probably involved in the second step, the conversion of ubisemiquinone to ubiquinol. The polypeptide is Na(+)-translocating NADH-quinone reductase subunit D (Shewanella piezotolerans (strain WP3 / JCM 13877)).